The following is a 154-amino-acid chain: Protein-export protein SecB (154 aa).

The protein belongs to the SecB family. Homotetramer, a dimer of dimers. One homotetramer interacts with 1 SecA dimer.

The protein localises to the cytoplasm. In terms of biological role, one of the proteins required for the normal export of preproteins out of the cell cytoplasm. It is a molecular chaperone that binds to a subset of precursor proteins, maintaining them in a translocation-competent state. It also specifically binds to its receptor SecA. The chain is Protein-export protein SecB from Vibrio cholerae serotype O1 (strain ATCC 39541 / Classical Ogawa 395 / O395).